The chain runs to 77 residues: Large ribosomal subunit protein eL14 (77 aa).

The protein belongs to the eukaryotic ribosomal protein eL14 family.

The protein is Large ribosomal subunit protein eL14 of Methanococcus vannielii (strain ATCC 35089 / DSM 1224 / JCM 13029 / OCM 148 / SB).